A 396-amino-acid chain; its full sequence is Ribosomal RNA large subunit methyltransferase I (396 aa).

One can recognise a PUA domain in the interval 2–81 (SVRLVLTKGR…ETIDIAFFTR (80 aa)).

It belongs to the methyltransferase superfamily. RlmI family.

It localises to the cytoplasm. The catalysed reaction is cytidine(1962) in 23S rRNA + S-adenosyl-L-methionine = 5-methylcytidine(1962) in 23S rRNA + S-adenosyl-L-homocysteine + H(+). Its function is as follows. Specifically methylates the cytosine at position 1962 (m5C1962) of 23S rRNA. The chain is Ribosomal RNA large subunit methyltransferase I from Enterobacter sp. (strain 638).